Reading from the N-terminus, the 95-residue chain is Co-chaperonin GroES (95 aa).

The protein belongs to the GroES chaperonin family. Heptamer of 7 subunits arranged in a ring. Interacts with the chaperonin GroEL.

It localises to the cytoplasm. Its function is as follows. Together with the chaperonin GroEL, plays an essential role in assisting protein folding. The GroEL-GroES system forms a nano-cage that allows encapsulation of the non-native substrate proteins and provides a physical environment optimized to promote and accelerate protein folding. GroES binds to the apical surface of the GroEL ring, thereby capping the opening of the GroEL channel. The protein is Co-chaperonin GroES of Stenotrophomonas maltophilia (strain R551-3).